A 364-amino-acid polypeptide reads, in one-letter code: Arabinose metabolism transcriptional repressor (364 aa).

Residues 6–74 form the HTH gntR-type domain; sequence LPKYLQLKQE…QGSGTFVSRP (69 aa). The H-T-H motif DNA-binding region spans 34-53; that stretch reads EHEIANQFQLSRHTVRQALG.

It is found in the cytoplasm. Its function is as follows. Transcriptional repressor of the arabinose utilization genes. This is Arabinose metabolism transcriptional repressor (araR) from Geobacillus stearothermophilus (Bacillus stearothermophilus).